The sequence spans 174 residues: Gamma-crystallin D (174 aa).

2 Beta/gamma crystallin 'Greek key' domains span residues 2-40 (GKIT…RVDS) and 41-83 (GCWM…RLIP). The connecting peptide stretch occupies residues 84–87 (HAGS). Beta/gamma crystallin 'Greek key' domains are found at residues 88–128 (HRIR…NVLE) and 129–171 (GCWV…RRVM).

This sequence belongs to the beta/gamma-crystallin family. In terms of tissue distribution, detected in the superior olivary complex and fibers of the ventral aoustic stria of the auditory hindbrain.

In terms of biological role, crystallins are the dominant structural components of the vertebrate eye lens. In Rattus norvegicus (Rat), this protein is Gamma-crystallin D (Crygd).